Here is a 150-residue protein sequence, read N- to C-terminus: Ribonuclease K6 (150 aa).

Residues 1–23 (MVLCFPLLLLLLVLWGPVCLLHA) form the signal peptide. H38 serves as the catalytic Proton acceptor. 4 disulfides stabilise this stretch: C46–C104, C60–C114, C78–C129, and C85–C92. N55 carries an N-linked (GlcNAc...) asparagine glycan. Residues 61-65 (KHQNT) and K86 contribute to the substrate site. An N-linked (GlcNAc...) asparagine glycan is attached at N100. A substrate-binding site is contributed by R105. The active-site Proton donor is H145.

The protein belongs to the pancreatic ribonuclease family. In terms of assembly, interacts (via N-terminus) with bacterial lipopolysaccharide (LPS).

It is found in the secreted. The protein resides in the lysosome. The protein localises to the cytoplasmic granule. In terms of biological role, ribonuclease which shows a preference for the pyrimidines uridine and cytosine. Has potent antibacterial activity against a range of Gram-positive and Gram-negative bacteria, including P.aeruginosa, A.baumanii, M.luteus, S.aureus, E.faecalis, E.faecium, S.saprophyticus and E.coli. Causes loss of bacterial membrane integrity, and also promotes agglutination of Gram-negative bacteria. Probably contributes to urinary tract sterility. Bactericidal activity is independent of RNase activity. The chain is Ribonuclease K6 (RNASE6) from Miopithecus talapoin (Angolan talapoin).